The chain runs to 158 residues: Dysbindin domain-containing protein 2 (158 aa).

Residues 79 to 158 (FLPCEESSPA…DGGAEPGPCS (80 aa)) form a disordered region. Positions 106–131 (PTSDRTTSRTSSLSSDSSNLRSPNPS) are enriched in low complexity. Ser119 and Ser120 each carry phosphoserine. Thr137 is subject to Phosphothreonine. Ser142 is subject to Phosphoserine. A compositionally biased stretch (acidic residues) spans 142–151 (SDEEDGDDGG).

This sequence belongs to the dysbindin family. As to quaternary structure, monomer. Interacts with CSNK1D and CSNK1E.

May modulate the activity of casein kinase-1. Inhibits CSNK1D autophosphorylation (in vitro). This is Dysbindin domain-containing protein 2 (Dbndd2) from Mus musculus (Mouse).